Consider the following 336-residue polypeptide: Phosphate acyltransferase (336 aa).

This sequence belongs to the PlsX family. In terms of assembly, homodimer. Probably interacts with PlsY.

The protein localises to the cytoplasm. It carries out the reaction a fatty acyl-[ACP] + phosphate = an acyl phosphate + holo-[ACP]. The protein operates within lipid metabolism; phospholipid metabolism. Catalyzes the reversible formation of acyl-phosphate (acyl-PO(4)) from acyl-[acyl-carrier-protein] (acyl-ACP). This enzyme utilizes acyl-ACP as fatty acyl donor, but not acyl-CoA. This Ectopseudomonas mendocina (strain ymp) (Pseudomonas mendocina) protein is Phosphate acyltransferase.